The chain runs to 74 residues: VRVVVLALVAQVTLSQHWSYGWLPGGKRSVGELEATIKMMDTGGVVALPEETSAHVSERLRPYDVILKKWMPHK.

A signal peptide spans 1–15 (VRVVVLALVAQVTLS). At Q16 the chain carries Pyrrolidone carboxylic acid. Position 25 is a glycine amide (G25).

This sequence belongs to the GnRH family.

Its subcellular location is the secreted. Stimulates the secretion of gonadotropins. The protein is Progonadoliberin-3 (gnrh3) of Oncorhynchus tshawytscha (Chinook salmon).